A 107-amino-acid polypeptide reads, in one-letter code: Nucleoid-associated protein A1C_06705 (107 aa).

Belongs to the YbaB/EbfC family. In terms of assembly, homodimer.

The protein localises to the cytoplasm. It is found in the nucleoid. Its function is as follows. Binds to DNA and alters its conformation. May be involved in regulation of gene expression, nucleoid organization and DNA protection. The polypeptide is Nucleoid-associated protein A1C_06705 (Rickettsia akari (strain Hartford)).